Reading from the N-terminus, the 489-residue chain is MTLRHCVAVDLGASSGRVMLACYAPEQRTLTLREIHRFVNCLQKQGGVDTWDIDSLEAEIRTGLNKVCEEGILIDSIGIDTWGVDYVLLDRNGARIGLPVSYRDSRTDGVMARAIEQLGKADIYGRSGIQFLPFNTLYQLRALAEQQPELIKNVAHALLIPDYFSYRLTGNMNWEYTNATTTQLVNINSDNWDENLLNWTGVSAAWFGTPTHPGNVIGHWICPLGNQIPVVAVASHDTASAVIASPLASQDAAYLSSGTWSLMGFESKTPYTSDAALAANITNEGGAEGRYRVLKNIMGLWLLQRVLKEQNVSDLSALIADTETLAACRFVINPNDDRFINPANMSTEIQAACRETNQPVPNTPAELARCIFDSLALLYADVLQELATLRGKPFSQLHIVGGGCQNRLLNQLCADACGITVVAGPVEASTLGNIGIQLMTLDELTNVDDFRTVVTGNYALTTFTPHSCHEIARYRAQFQQKRLTKELCA.

13 to 17 provides a ligand contact to ATP; the sequence is ASSGR. A disulfide bridge connects residues Cys-68 and Cys-222. Substrate contacts are provided by residues Gly-83 and 236 to 238; that span reads HDT. The Proton acceptor role is filled by Asp-237. ATP is bound at residue Thr-259. Asn-296 is a substrate binding site. Residue Gln-304 participates in ATP binding. A disulfide bridge links Cys-353 with Cys-370. Residue Gly-402 participates in ATP binding. Cys-413 and Cys-417 are joined by a disulfide.

Belongs to the rhamnulokinase family. Requires Mg(2+) as cofactor.

It carries out the reaction L-rhamnulose + ATP = L-rhamnulose 1-phosphate + ADP + H(+). It functions in the pathway carbohydrate degradation; L-rhamnose degradation; glycerone phosphate from L-rhamnose: step 2/3. In terms of biological role, involved in the catabolism of L-rhamnose (6-deoxy-L-mannose). Catalyzes the transfer of the gamma-phosphate group from ATP to the 1-hydroxyl group of L-rhamnulose to yield L-rhamnulose 1-phosphate. This chain is Rhamnulokinase, found in Enterobacter sp. (strain 638).